A 104-amino-acid polypeptide reads, in one-letter code: Large ribosomal subunit protein bL27 (104 aa).

Residues 1–15 (MNNKYFLTKIDLQFF) constitute a propeptide that is removed on maturation.

It belongs to the bacterial ribosomal protein bL27 family. The N-terminus is cleaved by ribosomal processing cysteine protease Prp.

This is Large ribosomal subunit protein bL27 from Mycoplasma pneumoniae (strain ATCC 29342 / M129 / Subtype 1) (Mycoplasmoides pneumoniae).